A 227-amino-acid polypeptide reads, in one-letter code: Germin-like protein 3-3 (227 aa).

Residues 1 to 26 form the signal peptide; the sequence is MECFKTTLAGVVLVVLLLQQAPVLRA. An intrachain disulfide couples C36 to C51. The Cupin type-1 domain occupies 65–217; the sequence is SRLATGGDVN…ALRVDAGVVE (153 aa). N-linked (GlcNAc...) asparagine glycans are attached at residues N78 and N81. The Mn(2+) site is built by H114, H116, E121, and H163.

This sequence belongs to the germin family. As to quaternary structure, oligomer (believed to be a pentamer but probably hexamer).

Its subcellular location is the secreted. The protein resides in the extracellular space. The protein localises to the apoplast. May play a role in plant defense. Probably has no oxalate oxidase activity even if the active site is conserved. In Oryza sativa subsp. japonica (Rice), this protein is Germin-like protein 3-3.